We begin with the raw amino-acid sequence, 125 residues long: Histone H2A.v3 (125 aa).

The protein belongs to the histone H2A family. In terms of assembly, the nucleosome is a histone octamer containing two molecules each of H2A, H2B, H3 and H4 assembled in one H3-H4 heterotetramer and two H2A-H2B heterodimers. The octamer wraps approximately 147 bp of DNA.

The protein resides in the nucleus. The protein localises to the chromosome. Functionally, core component of nucleosome which plays a central role in DNA double strand break (DSB) repair. Nucleosomes wrap and compact DNA into chromatin, limiting DNA accessibility to the cellular machineries which require DNA as a template. Histones thereby play a central role in transcription regulation, DNA repair, DNA replication and chromosomal stability. DNA accessibility is regulated via a complex set of post-translational modifications of histones, also called histone code, and nucleosome remodeling. In Dictyostelium discoideum (Social amoeba), this protein is Histone H2A.v3 (H2Av3).